The chain runs to 537 residues: uncharacterized protein (537 aa).

This is an uncharacterized protein from Methanocaldococcus jannaschii (strain ATCC 43067 / DSM 2661 / JAL-1 / JCM 10045 / NBRC 100440) (Methanococcus jannaschii).